The chain runs to 339 residues: MTDAPAHTRERVTISEVARVAGVSKATVSRYIGGDRQLLAEATAKRLEEVIERLGYRPNQMARGLKRGQTRLIGMLVADILNPYSVAVMHGVETACRQHGYSLVVCNTNRDDEQERHHLVALQSYNVEGLIVNTLGHHPGELLNLQRDIPMVLVDRQLPELNVDLVGLDNADAVEQALDHLQAQGYRDILAVSEPLDGTSSRLERVQAFGASISRRPGMRQQVLEIGAGLQGQLASFLAHSGHGPQAIFTFNGVATLAVTRALLEAGRNLVADVGLIALDDLDWYPLVGKGITALAQPTERIGVAAFESLLGRLRGDSGAARRIDFKANLIIRGSTQPQ.

The 56-residue stretch at 12–67 (VTISEVARVAGVSKATVSRYIGGDRQLLAEATAKRLEEVIERLGYRPNQMARGLKR) folds into the HTH lacI-type domain. The segment at residues 14-33 (ISEVARVAGVSKATVSRYIG) is a DNA-binding region (H-T-H motif).

As to quaternary structure, homodimer in solution.

With respect to regulation, 2-ketogluconate acts as a molecular effector and causes dissociation of PtxS from its target promoter. Its function is as follows. Negatively regulates glucose metabolism by binding directly to the promoter region of the kgu and gad operons. It also negatively regulates its own synthesis. This Pseudomonas putida (strain ATCC 47054 / DSM 6125 / CFBP 8728 / NCIMB 11950 / KT2440) protein is HTH-type transcriptional regulator PtxS.